Consider the following 549-residue polypeptide: Glucose-6-phosphate isomerase (549 aa).

E354 acts as the Proton donor in catalysis. Active-site residues include H385 and K513.

This sequence belongs to the GPI family.

Its subcellular location is the cytoplasm. The enzyme catalyses alpha-D-glucose 6-phosphate = beta-D-fructose 6-phosphate. Its pathway is carbohydrate biosynthesis; gluconeogenesis. It participates in carbohydrate degradation; glycolysis; D-glyceraldehyde 3-phosphate and glycerone phosphate from D-glucose: step 2/4. Functionally, catalyzes the reversible isomerization of glucose-6-phosphate to fructose-6-phosphate. The polypeptide is Glucose-6-phosphate isomerase (Nitrosococcus oceani (strain ATCC 19707 / BCRC 17464 / JCM 30415 / NCIMB 11848 / C-107)).